Consider the following 328-residue polypeptide: Beta-ketoacyl-[acyl-carrier-protein] synthase III (328 aa).

Residues Cys-122 and His-255 contribute to the active site. The segment at 256–260 (QANIR) is ACP-binding. Asn-285 is an active-site residue.

The protein belongs to the thiolase-like superfamily. FabH family. Homodimer.

It is found in the cytoplasm. It catalyses the reaction malonyl-[ACP] + acetyl-CoA + H(+) = 3-oxobutanoyl-[ACP] + CO2 + CoA. It functions in the pathway lipid metabolism; fatty acid biosynthesis. In terms of biological role, catalyzes the condensation reaction of fatty acid synthesis by the addition to an acyl acceptor of two carbons from malonyl-ACP. Catalyzes the first condensation reaction which initiates fatty acid synthesis and may therefore play a role in governing the total rate of fatty acid production. Possesses both acetoacetyl-ACP synthase and acetyl transacylase activities. Its substrate specificity determines the biosynthesis of branched-chain and/or straight-chain of fatty acids. This chain is Beta-ketoacyl-[acyl-carrier-protein] synthase III, found in Herminiimonas arsenicoxydans.